Reading from the N-terminus, the 296-residue chain is Acetyl-coenzyme A carboxylase carboxyl transferase subunit beta (296 aa).

The CoA carboxyltransferase N-terminal domain occupies 26-295; that stretch reads VWTKCTNCEQ…PFKVGELIIE (270 aa). Residues cysteine 30, cysteine 33, cysteine 49, and cysteine 52 each coordinate Zn(2+). The C4-type zinc finger occupies 30 to 52; sequence CTNCEQVLYSEELKRNMQVCPKC.

It belongs to the AccD/PCCB family. In terms of assembly, acetyl-CoA carboxylase is a heterohexamer composed of biotin carboxyl carrier protein (AccB), biotin carboxylase (AccC) and two subunits each of ACCase subunit alpha (AccA) and ACCase subunit beta (AccD). Zn(2+) serves as cofactor.

The protein resides in the cytoplasm. The enzyme catalyses N(6)-carboxybiotinyl-L-lysyl-[protein] + acetyl-CoA = N(6)-biotinyl-L-lysyl-[protein] + malonyl-CoA. It functions in the pathway lipid metabolism; malonyl-CoA biosynthesis; malonyl-CoA from acetyl-CoA: step 1/1. Functionally, component of the acetyl coenzyme A carboxylase (ACC) complex. Biotin carboxylase (BC) catalyzes the carboxylation of biotin on its carrier protein (BCCP) and then the CO(2) group is transferred by the transcarboxylase to acetyl-CoA to form malonyl-CoA. The polypeptide is Acetyl-coenzyme A carboxylase carboxyl transferase subunit beta (Haemophilus ducreyi (strain 35000HP / ATCC 700724)).